We begin with the raw amino-acid sequence, 103 residues long: Small ribosomal subunit protein uS10 (103 aa).

This sequence belongs to the universal ribosomal protein uS10 family. Part of the 30S ribosomal subunit.

Its function is as follows. Involved in the binding of tRNA to the ribosomes. The sequence is that of Small ribosomal subunit protein uS10 from Chlorobaculum tepidum (strain ATCC 49652 / DSM 12025 / NBRC 103806 / TLS) (Chlorobium tepidum).